The following is a 631-amino-acid chain: Phosphomethylpyrimidine synthase (631 aa).

Substrate contacts are provided by residues Asn239, Met268, Tyr297, His333, 353-355 (SRG), 394-397 (DGLR), and Glu433. His437 is a binding site for Zn(2+). Tyr460 lines the substrate pocket. His501 contacts Zn(2+). Cys581, Cys584, and Cys589 together coordinate [4Fe-4S] cluster.

The protein belongs to the ThiC family. In terms of assembly, homodimer. [4Fe-4S] cluster serves as cofactor.

The enzyme catalyses 5-amino-1-(5-phospho-beta-D-ribosyl)imidazole + S-adenosyl-L-methionine = 4-amino-2-methyl-5-(phosphooxymethyl)pyrimidine + CO + 5'-deoxyadenosine + formate + L-methionine + 3 H(+). It functions in the pathway cofactor biosynthesis; thiamine diphosphate biosynthesis. In terms of biological role, catalyzes the synthesis of the hydroxymethylpyrimidine phosphate (HMP-P) moiety of thiamine from aminoimidazole ribotide (AIR) in a radical S-adenosyl-L-methionine (SAM)-dependent reaction. The sequence is that of Phosphomethylpyrimidine synthase from Escherichia coli O127:H6 (strain E2348/69 / EPEC).